The sequence spans 168 residues: Large ribosomal subunit protein uL10 (168 aa).

The protein belongs to the universal ribosomal protein uL10 family. In terms of assembly, part of the ribosomal stalk of the 50S ribosomal subunit. The N-terminus interacts with L11 and the large rRNA to form the base of the stalk. The C-terminus forms an elongated spine to which L12 dimers bind in a sequential fashion forming a multimeric L10(L12)X complex.

Functionally, forms part of the ribosomal stalk, playing a central role in the interaction of the ribosome with GTP-bound translation factors. This Pediococcus pentosaceus (strain ATCC 25745 / CCUG 21536 / LMG 10740 / 183-1w) protein is Large ribosomal subunit protein uL10.